The following is a 101-amino-acid chain: Small ribosomal subunit protein uS14 (101 aa).

The disordered stretch occupies residues Phe-46 to Gly-72. Residues Arg-61 to Pro-70 are compositionally biased toward basic and acidic residues.

The protein belongs to the universal ribosomal protein uS14 family. In terms of assembly, part of the 30S ribosomal subunit. Contacts proteins S3 and S10.

Binds 16S rRNA, required for the assembly of 30S particles and may also be responsible for determining the conformation of the 16S rRNA at the A site. This is Small ribosomal subunit protein uS14 from Corynebacterium diphtheriae (strain ATCC 700971 / NCTC 13129 / Biotype gravis).